The primary structure comprises 398 residues: Phosphoglycerate kinase (398 aa).

Residues 23–25, Arg38, 61–64, Arg120, and Arg153 contribute to the substrate site; these read DLN and HFGR. ATP contacts are provided by residues Lys203, Glu325, and 355–358; that span reads GGDT.

The protein belongs to the phosphoglycerate kinase family. In terms of assembly, monomer.

The protein localises to the cytoplasm. The enzyme catalyses (2R)-3-phosphoglycerate + ATP = (2R)-3-phospho-glyceroyl phosphate + ADP. Its pathway is carbohydrate degradation; glycolysis; pyruvate from D-glyceraldehyde 3-phosphate: step 2/5. This is Phosphoglycerate kinase from Sphingopyxis alaskensis (strain DSM 13593 / LMG 18877 / RB2256) (Sphingomonas alaskensis).